Here is a 278-residue protein sequence, read N- to C-terminus: Putative transcription factor kapC (278 aa).

Pro residues predominate over residues 1-10; it reads MQPALAPAPH. The segment at 1–121 is disordered; that stretch reads MQPALAPAPH…QNRAAQRAFR (121 aa). Residues 56–68 are compositionally biased toward polar residues; sequence PTATTSPRDQNNI. The bZIP domain occupies 103–166; sequence PLSTSKRAAQ…EYVINLQSRL (64 aa). A basic motif region spans residues 104–127; the sequence is LSTSKRAAQNRAAQRAFRQRKESY. Positions 109-119 are enriched in low complexity; sequence RAAQNRAAQRA. Residues 131-162 are leucine-zipper; that stretch reads LEEQVKEYEVMSQEYKALQAENYQLREYVINL. Residues 173–278 are disordered; the sequence is VPELPGNIDL…PPTHGLPMVS (106 aa). A compositionally biased stretch (low complexity) spans 198–214; the sequence is PGQAGASAPPQGSPQSQ. The span at 215–226 shows a compositional bias: polar residues; that stretch reads VSIANDDMNSLN. Basic and acidic residues predominate over residues 254–269; the sequence is GRGDETADPSETKTEP.

This sequence belongs to the bZIP family.

The protein localises to the nucleus. Its function is as follows. Putative transcription factor. This chain is Putative transcription factor kapC (kapC), found in Emericella nidulans (strain FGSC A4 / ATCC 38163 / CBS 112.46 / NRRL 194 / M139) (Aspergillus nidulans).